Reading from the N-terminus, the 231-residue chain is Potassium/proton antiporter CemA (231 aa).

The next 3 membrane-spanning stretches (helical) occupy residues 9 to 29, 116 to 136, and 191 to 211; these read FIPL…SFLF, IICF…LIIL, and IISG…KYWI.

Belongs to the CemA family.

Its subcellular location is the plastid. It localises to the chloroplast inner membrane. The catalysed reaction is K(+)(in) + H(+)(out) = K(+)(out) + H(+)(in). In terms of biological role, contributes to K(+)/H(+) antiport activity by supporting proton efflux to control proton extrusion and homeostasis in chloroplasts in a light-dependent manner to modulate photosynthesis. Prevents excessive induction of non-photochemical quenching (NPQ) under continuous-light conditions. Indirectly promotes efficient inorganic carbon uptake into chloroplasts. This chain is Potassium/proton antiporter CemA, found in Manihot esculenta (Cassava).